The primary structure comprises 159 residues: Neuroglobin (159 aa).

One can recognise a Globin domain in the interval 3–151; sequence KLSEKDKGLI…VVSAMTRGWA (149 aa). Positions 66 and 98 each coordinate heme b.

The protein belongs to the globin family. In terms of assembly, monomer. Homodimers and homotetramers. Mainly monomeric but also detected as part of homodimers and homotetramers. As to expression, detected in brain, eye and gill, but not in muscle and blood (at protein level). Particularly high expression in the periventral zone of tectum opticum, with significant expression detected in white matter, preglomerular nucleus, posterior tubular nucleus, torus longitudinalis, hypothalamus, pituitary gland, posterior tuberculum, hypothalamus, synencephalon and formatio reticularis. Detected also in brain regions of the visual system, predominantly in parts of tectum opticum and torus semicircularis, area dorsalis telencephali and medulla oblongata. Strong expression observed in sensory epithelium of peripheral olfactory organ, and outer and inner nuclear layers and ganglion cell layer of retina.

The protein localises to the cytoplasm. It is found in the cytosol. Its subcellular location is the mitochondrion matrix. It carries out the reaction Fe(III)-heme b-[protein] + nitric oxide + H2O = Fe(II)-heme b-[protein] + nitrite + 2 H(+). Monomeric globin with a bis-histidyl six-coordinate heme-iron atom through which it can bind dioxygen, carbon monoxide and nitric oxide. Could help transport oxygen and increase its availability to the metabolically active neuronal tissues, though its low quantity in tissues as well as its high affinity for dioxygen, which may limit its oxygen-releasing ability, argue against it. The ferrous/deoxygenated form exhibits a nitrite reductase activity and it could produce nitric oxide which in turn inhibits cellular respiration in response to hypoxia. In its ferrous/deoxygenated state, it may also exhibit GDI (Guanine nucleotide Dissociation Inhibitor) activity toward heterotrimeric G-alpha proteins, thereby regulating signal transduction to facilitate neuroprotective responses in the wake of hypoxia and associated oxidative stress. In Danio rerio (Zebrafish), this protein is Neuroglobin (ngb).